The following is a 306-amino-acid chain: MINPIYLILADFFDRYIGEPPEKVHPVIFIGKLIIFFENVFKSTNSINKSRDLLFGFFNVILVLAIVFFMAYEIEQVINSISNSYIRISLYSIILSFSIGHKSLIEFSKAPIRYIVNNDIDGAKKSVQCVVSRNTSELGKKHILSASIESASENITDSIIAPLIYVAIFGLPGAFLYRAVNTFDAMIGYKSEKYLYYGKTAAYLDDILNFIPSRIAGMLLIITAPFYGGKIKSAFYGFFKEGNKTPSPNSGYTMATIANSLNMGLEKIGCYKLGKGEITIEKALNSLKAVDYSVLLFLIIYTVLLM.

A run of 6 helical transmembrane segments spans residues 17–37, 54–74, 88–108, 155–175, 207–227, and 286–306; these read IGEP…IIFF, LFGF…AYEI, ISLY…IEFS, ITDS…PGAF, ILNF…APFY, and SLKA…VLLM.

It belongs to the CobD/CbiB family.

It is found in the cell membrane. It participates in cofactor biosynthesis; adenosylcobalamin biosynthesis. Converts cobyric acid to cobinamide by the addition of aminopropanol on the F carboxylic group. This is Probable cobalamin biosynthesis protein CobD from Methanococcus maripaludis (strain C5 / ATCC BAA-1333).